A 314-amino-acid chain; its full sequence is Inactive protein FRIGIDA (314 aa).

The segment covering 1–18 (MSNYPPTVAAQPTTTANP) has biased composition (low complexity). Positions 1–31 (MSNYPPTVAAQPTTTANPLLQRHQSEQRRRE) are disordered. Residues 67–97 (VAVETFKRQFDDLQKHIESIENAIDSKLESN) are a coiled coil.

This sequence belongs to the Frigida family.

The protein resides in the nucleus. The sequence is that of Inactive protein FRIGIDA (FRI) from Arabidopsis thaliana (Mouse-ear cress).